We begin with the raw amino-acid sequence, 76 residues long: cAMP-dependent protein kinase inhibitor alpha (76 aa).

Thr2 is subject to N-acetylthreonine. The interval 49–76 is disordered; it reads KTEGEEDAQRSSTEQSGEAQGEAAKSES.

The protein belongs to the PKI family.

Its function is as follows. Extremely potent competitive inhibitor of cAMP-dependent protein kinase activity, this protein interacts with the catalytic subunit of the enzyme after the cAMP-induced dissociation of its regulatory chains. This is cAMP-dependent protein kinase inhibitor alpha (PKIA) from Homo sapiens (Human).